The primary structure comprises 79 residues: MSRLGIMVLTLLLLVYMATSHQDAGEKQATQRDAINFRWKRSLTRRTATEECEESCEEEEKTCCGEXDGEPVCARFCLG.

The first 20 residues, 1–20 (MSRLGIMVLTLLLLVYMATS), serve as a signal peptide directing secretion. Residues 21–44 (HQDAGEKQATQRDAINFRWKRSLT) constitute a propeptide that is removed on maturation. 3 cysteine pairs are disulfide-bonded: Cys52-Cys64, Cys56-Cys73, and Cys63-Cys77. Position 78 is a leucine amide (Leu78).

Belongs to the conotoxin O3 superfamily. Expressed by the venom duct.

It is found in the secreted. In Conus arenatus (Sand-dusted cone), this protein is Conotoxin ArMSGL-0124.